The following is a 660-amino-acid chain: tRNA 5-methylaminomethyl-2-thiouridine biosynthesis bifunctional protein MnmC (660 aa).

A tRNA (mnm(5)s(2)U34)-methyltransferase region spans residues Met1–Ile235. The interval Ile266 to Lys660 is FAD-dependent cmnm(5)s(2)U34 oxidoreductase.

This sequence in the N-terminal section; belongs to the methyltransferase superfamily. tRNA (mnm(5)s(2)U34)-methyltransferase family. In the C-terminal section; belongs to the DAO family. FAD serves as cofactor.

It localises to the cytoplasm. The catalysed reaction is 5-aminomethyl-2-thiouridine(34) in tRNA + S-adenosyl-L-methionine = 5-methylaminomethyl-2-thiouridine(34) in tRNA + S-adenosyl-L-homocysteine + H(+). In terms of biological role, catalyzes the last two steps in the biosynthesis of 5-methylaminomethyl-2-thiouridine (mnm(5)s(2)U) at the wobble position (U34) in tRNA. Catalyzes the FAD-dependent demodification of cmnm(5)s(2)U34 to nm(5)s(2)U34, followed by the transfer of a methyl group from S-adenosyl-L-methionine to nm(5)s(2)U34, to form mnm(5)s(2)U34. In Pseudomonas savastanoi pv. phaseolicola (strain 1448A / Race 6) (Pseudomonas syringae pv. phaseolicola (strain 1448A / Race 6)), this protein is tRNA 5-methylaminomethyl-2-thiouridine biosynthesis bifunctional protein MnmC.